We begin with the raw amino-acid sequence, 316 residues long: Phosphoglycerate mutase-like protein AT74 (316 aa).

Catalysis depends on histidine 17, which acts as the Tele-phosphohistidine intermediate. The Proton donor/acceptor role is filled by glutamate 106. A disordered region spans residues 275–316; the sequence is KECETEATEDREEEEEEEGKRVNLLTSSEYSNEPELYNGQCC. Positions 279–291 are enriched in acidic residues; that stretch reads TEATEDREEEEEE.

The protein belongs to the phosphoglycerate mutase family. As to expression, expressed in roots, leaves, stems, flowers and siliques.

In terms of biological role, phosphoglycerate mutase-like protein lacking PGM activity. May play a role in carbohydrates metabolism. The polypeptide is Phosphoglycerate mutase-like protein AT74 (Arabidopsis thaliana (Mouse-ear cress)).